Reading from the N-terminus, the 206-residue chain is Large ribosomal subunit protein uL4 (206 aa).

The segment at 63–97 (MYKQKGTGRARHHSARAPQFRGGGKAHGPVVRSHE) is disordered. Residues 64–77 (YKQKGTGRARHHSA) show a composition bias toward basic residues.

It belongs to the universal ribosomal protein uL4 family. As to quaternary structure, part of the 50S ribosomal subunit.

Functionally, one of the primary rRNA binding proteins, this protein initially binds near the 5'-end of the 23S rRNA. It is important during the early stages of 50S assembly. It makes multiple contacts with different domains of the 23S rRNA in the assembled 50S subunit and ribosome. Its function is as follows. Forms part of the polypeptide exit tunnel. This chain is Large ribosomal subunit protein uL4, found in Rhizobium rhizogenes (strain K84 / ATCC BAA-868) (Agrobacterium radiobacter).